A 495-amino-acid polypeptide reads, in one-letter code: Ferruginol synthase (495 aa).

A topological domain (lumenal) is located at residue Met1. Residues 2 to 22 (DSFPLLAALFFIAATITFLSF) form a helical membrane-spanning segment. Topologically, residues 23-495 (RRRRNLPPGP…PLRIIPIVKS (473 aa)) are cytoplasmic. A heme-binding site is contributed by Cys437.

This sequence belongs to the cytochrome P450 family. Heme serves as cofactor. As to expression, expression is more abundant in the rhizome.

Its subcellular location is the endoplasmic reticulum membrane. It carries out the reaction abieta-8,11,13-triene + reduced [NADPH--hemoprotein reductase] + O2 = ferruginol + oxidized [NADPH--hemoprotein reductase] + H2O + H(+). In terms of biological role, cytochrome P450 enzyme (CYP) which catalyzes a unique two-electron oxidation cascade on abieta-8,11,13-triene to produce ferruginol, an intermediate in tanshinone biosynthesis. This chain is Ferruginol synthase, found in Salvia miltiorrhiza (Chinese sage).